The following is a 292-amino-acid chain: MGDGGAERDRGPKRREEPGGRSGRHGEHRGAEDLRADTGSASPREIAGTSASSPAGSRESGGDSDGQQALGETDHCRRILVRDAKGTIREIVLPKGLDLDRPKRTRTSFTAEQLYRLEMEFQRCQYVVGRERTELARQLNLSETQVKVWFQNRRTKQKKDQSRDLEKRASSSASEAFATSNVLRLLEQGRLLSVPRAPSLLALTPGLPGLPASHRGTSLVDPRNSSPRLNPMPSASASSPLPPPLPAICFSSAPLLDLPAGYKLGSSAFEPYSRLEQQKVGSPGQSDKKADI.

Basic and acidic residues predominate over residues 1–36 (MGDGGAERDRGPKRREEPGGRSGRHGEHRGAEDLRA). The segment at 1–74 (MGDGGAERDR…DGQQALGETD (74 aa)) is disordered. The homeobox DNA-binding region spans 102–161 (PKRTRTSFTAEQLYRLEMEFQRCQYVVGRERTELARQLNLSETQVKVWFQNRRTKQKKDQ). Residues 207-242 (LPGLPASHRGTSLVDPRNSSPRLNPMPSASASSPLP) form a disordered region.

This sequence belongs to the EMX homeobox family. As to expression, expressed in the developing and mature retina.

It localises to the nucleus. Functionally, transcription factor that may function in dorsoventral specification of the forebrain. Regulates the expression of Wnt signaling antagonists including the expression of a truncated TCF7L2 isoform that cannot bind CTNNB1 and acts therefore as a potent dominant-negative Wnt antagonist. Plays a crucial role in eye development and, in particular, in the specification of the ventral optic vesicle. May be a regulator of axial polarization in the retina. In Mus musculus (Mouse), this protein is Ventral anterior homeobox 2 (Vax2).